The chain runs to 251 residues: uncharacterized protein (251 aa).

This is an uncharacterized protein from Homo sapiens (Human).